The chain runs to 278 residues: HTH-type transcriptional activator RhaS (278 aa).

Residues 174 to 272 (NLLLAWLEDH…NWSPRDIRQG (99 aa)) enclose the HTH araC/xylS-type domain. DNA-binding regions (H-T-H motif) lie at residues 191-212 (DAVA…KQQT) and 239-262 (VTDI…RREF).

As to quaternary structure, binds DNA as a dimer.

The protein resides in the cytoplasm. Its function is as follows. Activates expression of the rhaBAD and rhaT operons. The chain is HTH-type transcriptional activator RhaS from Escherichia coli O139:H28 (strain E24377A / ETEC).